The sequence spans 118 residues: NADH-quinone oxidoreductase subunit A 2 (118 aa).

3 helical membrane-spanning segments follow: residues 5–25 (YLPI…SVIF), 62–82 (LIAM…PWAV), and 87–107 (LGMF…VGYV).

The protein belongs to the complex I subunit 3 family. In terms of assembly, NDH-1 is composed of 14 different subunits. Subunits NuoA, H, J, K, L, M, N constitute the membrane sector of the complex.

The protein localises to the cell inner membrane. The catalysed reaction is a quinone + NADH + 5 H(+)(in) = a quinol + NAD(+) + 4 H(+)(out). Its function is as follows. NDH-1 shuttles electrons from NADH, via FMN and iron-sulfur (Fe-S) centers, to quinones in the respiratory chain. The immediate electron acceptor for the enzyme in this species is believed to be ubiquinone. Couples the redox reaction to proton translocation (for every two electrons transferred, four hydrogen ions are translocated across the cytoplasmic membrane), and thus conserves the redox energy in a proton gradient. This chain is NADH-quinone oxidoreductase subunit A 2, found in Citrifermentans bemidjiense (strain ATCC BAA-1014 / DSM 16622 / JCM 12645 / Bem) (Geobacter bemidjiensis).